Here is a 283-residue protein sequence, read N- to C-terminus: Pantothenate synthetase (283 aa).

ATP is bound at residue 31-38 (MGALHDGH). The active-site Proton donor is His-38. A (R)-pantoate-binding site is contributed by Gln-62. Residue Gln-62 coordinates beta-alanine. 148–151 (GKKD) contributes to the ATP binding site. Gln-154 contacts (R)-pantoate. ATP-binding positions include Val-177 and 185 to 188 (KSSR).

Belongs to the pantothenate synthetase family. As to quaternary structure, homodimer.

Its subcellular location is the cytoplasm. It carries out the reaction (R)-pantoate + beta-alanine + ATP = (R)-pantothenate + AMP + diphosphate + H(+). Its pathway is cofactor biosynthesis; (R)-pantothenate biosynthesis; (R)-pantothenate from (R)-pantoate and beta-alanine: step 1/1. In terms of biological role, catalyzes the condensation of pantoate with beta-alanine in an ATP-dependent reaction via a pantoyl-adenylate intermediate. The polypeptide is Pantothenate synthetase (Staphylococcus aureus (strain bovine RF122 / ET3-1)).